Here is a 353-residue protein sequence, read N- to C-terminus: UDP-3-O-acylglucosamine N-acyltransferase (353 aa).

Residue His246 is the Proton acceptor of the active site.

It belongs to the transferase hexapeptide repeat family. LpxD subfamily. Homotrimer.

The catalysed reaction is a UDP-3-O-[(3R)-3-hydroxyacyl]-alpha-D-glucosamine + a (3R)-hydroxyacyl-[ACP] = a UDP-2-N,3-O-bis[(3R)-3-hydroxyacyl]-alpha-D-glucosamine + holo-[ACP] + H(+). It participates in bacterial outer membrane biogenesis; LPS lipid A biosynthesis. Functionally, catalyzes the N-acylation of UDP-3-O-acylglucosamine using 3-hydroxyacyl-ACP as the acyl donor. Is involved in the biosynthesis of lipid A, a phosphorylated glycolipid that anchors the lipopolysaccharide to the outer membrane of the cell. The chain is UDP-3-O-acylglucosamine N-acyltransferase from Chlorobaculum tepidum (strain ATCC 49652 / DSM 12025 / NBRC 103806 / TLS) (Chlorobium tepidum).